The sequence spans 100 residues: Acylphosphatase (100 aa).

The 90-residue stretch at 3–92 folds into the Acylphosphatase-like domain; sequence RRSYSVIGRV…PLPDTFDIRF (90 aa). Active-site residues include R18 and N36. The segment at 76 to 100 is disordered; sequence DDPAHEGPLPDTFDIRFRAPGSASE.

The protein belongs to the acylphosphatase family.

The enzyme catalyses an acyl phosphate + H2O = a carboxylate + phosphate + H(+). This chain is Acylphosphatase (acyP), found in Nitratidesulfovibrio vulgaris (strain ATCC 29579 / DSM 644 / CCUG 34227 / NCIMB 8303 / VKM B-1760 / Hildenborough) (Desulfovibrio vulgaris).